Consider the following 209-residue polypeptide: N-(5'-phosphoribosyl)anthranilate isomerase (209 aa).

It belongs to the TrpF family.

The enzyme catalyses N-(5-phospho-beta-D-ribosyl)anthranilate = 1-(2-carboxyphenylamino)-1-deoxy-D-ribulose 5-phosphate. The protein operates within amino-acid biosynthesis; L-tryptophan biosynthesis; L-tryptophan from chorismate: step 3/5. In Pelobacter propionicus (strain DSM 2379 / NBRC 103807 / OttBd1), this protein is N-(5'-phosphoribosyl)anthranilate isomerase.